A 148-amino-acid polypeptide reads, in one-letter code: Large ribosomal subunit protein uL13 (148 aa).

The protein belongs to the universal ribosomal protein uL13 family. Part of the 50S ribosomal subunit.

In terms of biological role, this protein is one of the early assembly proteins of the 50S ribosomal subunit, although it is not seen to bind rRNA by itself. It is important during the early stages of 50S assembly. This Ureaplasma urealyticum serovar 10 (strain ATCC 33699 / Western) protein is Large ribosomal subunit protein uL13.